The chain runs to 529 residues: Peptide chain release factor 3 (529 aa).

One can recognise a tr-type G domain in the interval alanine 11–methionine 280. GTP-binding positions include serine 20–threonine 27, aspartate 88–histidine 92, and asparagine 142–aspartate 145.

This sequence belongs to the TRAFAC class translation factor GTPase superfamily. Classic translation factor GTPase family. PrfC subfamily.

It localises to the cytoplasm. Its function is as follows. Increases the formation of ribosomal termination complexes and stimulates activities of RF-1 and RF-2. It binds guanine nucleotides and has strong preference for UGA stop codons. It may interact directly with the ribosome. The stimulation of RF-1 and RF-2 is significantly reduced by GTP and GDP, but not by GMP. The chain is Peptide chain release factor 3 from Salmonella agona (strain SL483).